The primary structure comprises 170 residues: Peptide deformylase (170 aa).

The Fe cation site is built by cysteine 94 and histidine 136. Glutamate 137 is a catalytic residue. Histidine 140 lines the Fe cation pocket.

Belongs to the polypeptide deformylase family. Fe(2+) is required as a cofactor.

It carries out the reaction N-terminal N-formyl-L-methionyl-[peptide] + H2O = N-terminal L-methionyl-[peptide] + formate. Functionally, removes the formyl group from the N-terminal Met of newly synthesized proteins. Requires at least a dipeptide for an efficient rate of reaction. N-terminal L-methionine is a prerequisite for activity but the enzyme has broad specificity at other positions. In Wolinella succinogenes (strain ATCC 29543 / DSM 1740 / CCUG 13145 / JCM 31913 / LMG 7466 / NCTC 11488 / FDC 602W) (Vibrio succinogenes), this protein is Peptide deformylase.